The sequence spans 603 residues: Polypeptide N-acetylgalactosaminyltransferase 10 (603 aa).

The Cytoplasmic portion of the chain corresponds to 1–11 (MRRKEKRLLQA). The helical; Signal-anchor for type II membrane protein transmembrane segment at 12 to 31 (VALALAALVLLPNVGLWALY) threads the bilayer. Topologically, residues 32 to 603 (RERQPDGSPG…STVLENFNRN (572 aa)) are lumenal. Residues N124 and N146 are each glycosylated (N-linked (GlcNAc...) asparagine). 5 cysteine pairs are disulfide-bonded: C135–C365, C356–C432, C471–C488, C523–C538, and C563–C578. A catalytic subdomain A region spans residues 144 to 253 (LPNTSIIIPF…VNWLPPLLDR (110 aa)). Residues D185 and R214 each coordinate substrate. D237 contacts Mn(2+). S238 lines the substrate pocket. A Mn(2+)-binding site is contributed by H239. The tract at residues 311–373 (PFESPVMAGG…PCSRVGHIYR (63 aa)) is catalytic subdomain B. A substrate-binding site is contributed by W342. H370 provides a ligand contact to Mn(2+). R373 and Y378 together coordinate substrate. The segment at 373 to 384 (RKYVPYKVPAGV) is flexible loop. Residues 458-590 (AAWGEIRNVG…SSLTQQWLFE (133 aa)) form the Ricin B-type lectin domain. An N-linked (GlcNAc...) asparagine glycan is attached at N593.

Belongs to the glycosyltransferase 2 family. GalNAc-T subfamily. Requires Mn(2+) as cofactor. In terms of tissue distribution, highly expressed in the sublingual gland, testis, small intestine, colon and ovary. Expressed at intermediate level in heart, brain, spleen, lung, stomach, cervix and uterus.

It localises to the golgi apparatus membrane. The catalysed reaction is L-seryl-[protein] + UDP-N-acetyl-alpha-D-galactosamine = a 3-O-[N-acetyl-alpha-D-galactosaminyl]-L-seryl-[protein] + UDP + H(+). The enzyme catalyses L-threonyl-[protein] + UDP-N-acetyl-alpha-D-galactosamine = a 3-O-[N-acetyl-alpha-D-galactosaminyl]-L-threonyl-[protein] + UDP + H(+). It participates in protein modification; protein glycosylation. Functionally, catalyzes the initial reaction in O-linked oligosaccharide biosynthesis, the transfer of an N-acetyl-D-galactosamine residue to a serine or threonine residue on the protein receptor. Has activity toward Muc5Ac and EA2 peptide substrates. This Rattus norvegicus (Rat) protein is Polypeptide N-acetylgalactosaminyltransferase 10 (Galnt10).